Reading from the N-terminus, the 243-residue chain is Probable transcriptional regulator ycf27 (243 aa).

The 114-residue stretch at 7–120 (KILVVDDEAS…ELEARIRSVL (114 aa)) folds into the Response regulatory domain. Asp56 bears the 4-aspartylphosphate mark. A DNA-binding region (H-T-H motif) is located at residues 76–94 (DVPIIMLTALGEVCDRITG). The segment at residues 135–236 (SGIISIGFLK…ARGTGYLFQR (102 aa)) is a DNA-binding region (ompR/PhoB-type).

The protein localises to the plastid. It localises to the chloroplast. Functionally, probable promoter-specific protein mediating the interaction between DNA and RNA polymerase. The chain is Probable transcriptional regulator ycf27 (ycf27) from Porphyra purpurea (Red seaweed).